We begin with the raw amino-acid sequence, 339 residues long: Methionine import ATP-binding protein MetN 2 (339 aa).

The 240-residue stretch at 2 to 241 (ISFNNVSKVY…PKTTTTQNFV (240 aa)) folds into the ABC transporter domain. 38 to 45 (GFSGAGKS) serves as a coordination point for ATP.

Belongs to the ABC transporter superfamily. Methionine importer (TC 3.A.1.24) family. The complex is composed of two ATP-binding proteins (MetN), two transmembrane proteins (MetI) and a solute-binding protein (MetQ).

It is found in the cell membrane. The enzyme catalyses L-methionine(out) + ATP + H2O = L-methionine(in) + ADP + phosphate + H(+). The catalysed reaction is D-methionine(out) + ATP + H2O = D-methionine(in) + ADP + phosphate + H(+). In terms of biological role, part of the ABC transporter complex MetNIQ involved in methionine import. Responsible for energy coupling to the transport system. In Bacillus anthracis, this protein is Methionine import ATP-binding protein MetN 2.